The chain runs to 658 residues: UvrABC system protein B (658 aa).

Positions 26–413 constitute a Helicase ATP-binding domain; it reads EGINSGKKKQ…SPEVIEQIIR (388 aa). 39–46 contributes to the ATP binding site; the sequence is GATGTGKT. The Beta-hairpin signature appears at 92 to 115; the sequence is YYDYYQPEAYVPQTDTFIEKDAQI. The 167-residue stretch at 430 to 596 folds into the Helicase C-terminal domain; that stretch reads QIDDLLGEIQ…TIQKGVRDVI (167 aa). Residues 622–657 form the UVR domain; the sequence is EKTIAKMEAEMKEAAKALDFERAAELRDLLLELKAE.

Belongs to the UvrB family. Forms a heterotetramer with UvrA during the search for lesions. Interacts with UvrC in an incision complex.

The protein localises to the cytoplasm. In terms of biological role, the UvrABC repair system catalyzes the recognition and processing of DNA lesions. A damage recognition complex composed of 2 UvrA and 2 UvrB subunits scans DNA for abnormalities. Upon binding of the UvrA(2)B(2) complex to a putative damaged site, the DNA wraps around one UvrB monomer. DNA wrap is dependent on ATP binding by UvrB and probably causes local melting of the DNA helix, facilitating insertion of UvrB beta-hairpin between the DNA strands. Then UvrB probes one DNA strand for the presence of a lesion. If a lesion is found the UvrA subunits dissociate and the UvrB-DNA preincision complex is formed. This complex is subsequently bound by UvrC and the second UvrB is released. If no lesion is found, the DNA wraps around the other UvrB subunit that will check the other stand for damage. The sequence is that of UvrABC system protein B from Bacillus cereus (strain ZK / E33L).